The following is a 115-amino-acid chain: Insulin (115 aa).

The N-terminal stretch at 1-22 (MAALWLQSVSLLVLMLVSWSGS) is a signal peptide. 3 disulfide bridges follow: Cys-32-Cys-101, Cys-44-Cys-114, and Cys-100-Cys-105. Residues 56-92 (DVDPLLGFLPAKSGGAAAGGENEVAEFAFKDQMEMMV) constitute a propeptide, c peptide.

The protein belongs to the insulin family. As to quaternary structure, heterodimer of a B chain and an A chain linked by two disulfide bonds.

It is found in the secreted. Insulin decreases blood glucose concentration. It increases cell permeability to monosaccharides, amino acids and fatty acids. It accelerates glycolysis, the pentose phosphate cycle, and glycogen synthesis in liver. The sequence is that of Insulin (ins) from Verasper moseri (Barfin flounder).